A 387-amino-acid chain; its full sequence is MSVIKMTDLDLAGKRVFIRADLNVPVKDGKVTSDARIRASLPTIELALKQGAKVMVTSHLGRPTEGEYNEEFSLLPVVNYLKDKLSNPVRLVKDYLDGVDVAEGELVVLENVRFNKGEKKDDETLSKKYAALCDVFVMDAFGTAHRAQASTHGIGKFADVACAGPLLAAELDALGKALKEPARPMVAIVGGSKVSTKLTVLDSLSKIADQLIVGGGIANTFIAAQGHDVGKSLYEADLVDEAKRLLTTCNIPVPSDVRVATEFSETASATLKSVNDVKADEQILDIGDASAQELAEILKNAKTILWNGPVGVFEFPNFRKGTEIVANAIADSEAFSIAGGGDTLAAIDLFGIADKISYISTGGGAFLEFVEGKVLPAVAMLEERAKK.

Residues 21 to 23, Arg36, and 59 to 62 contribute to the substrate site; these read DLN and HLGR. Lys84 carries the post-translational modification N6-acetyllysine. 2 residues coordinate substrate: Arg113 and Arg146. ATP contacts are provided by residues Lys197, Glu314, and 340-343; that span reads GGDT.

Belongs to the phosphoglycerate kinase family. As to quaternary structure, monomer.

The protein resides in the cytoplasm. It catalyses the reaction (2R)-3-phosphoglycerate + ATP = (2R)-3-phospho-glyceroyl phosphate + ADP. It participates in carbohydrate degradation; glycolysis; pyruvate from D-glyceraldehyde 3-phosphate: step 2/5. This chain is Phosphoglycerate kinase, found in Shigella sonnei (strain Ss046).